A 150-amino-acid chain; its full sequence is D-aminoacyl-tRNA deacylase (150 aa).

The Gly-cisPro motif, important for rejection of L-amino acids motif lies at 136–137 (GP).

Belongs to the DTD family. Homodimer.

The protein resides in the cytoplasm. The catalysed reaction is glycyl-tRNA(Ala) + H2O = tRNA(Ala) + glycine + H(+). It catalyses the reaction a D-aminoacyl-tRNA + H2O = a tRNA + a D-alpha-amino acid + H(+). Its function is as follows. An aminoacyl-tRNA editing enzyme that deacylates mischarged D-aminoacyl-tRNAs. Also deacylates mischarged glycyl-tRNA(Ala), protecting cells against glycine mischarging by AlaRS. Acts via tRNA-based rather than protein-based catalysis; rejects L-amino acids rather than detecting D-amino acids in the active site. By recycling D-aminoacyl-tRNA to D-amino acids and free tRNA molecules, this enzyme counteracts the toxicity associated with the formation of D-aminoacyl-tRNA entities in vivo and helps enforce protein L-homochirality. The chain is D-aminoacyl-tRNA deacylase from Staphylococcus epidermidis (strain ATCC 35984 / DSM 28319 / BCRC 17069 / CCUG 31568 / BM 3577 / RP62A).